We begin with the raw amino-acid sequence, 546 residues long: MDKRAMLGAIGLAFGLMAWPFGASAKEKSMVWNEQWKTPSFVSGSLLKGEDAPEELVYRYLDQEKNTFQLGGQARERLSLIGKQTDELGHTVMRFEQRYRGIPVYGAVLVAHVNDGELSSLSGTLIPNLDKRTLKTEAAISIQQAEMIAKQDVADAVTKERPAAEEGKPTRLVIYPDGETPRLAYEVNVRFLTPVPGNWIYMIDAADGKVLNKWNQMDEAKPGGGQPVAGTSTVGVGRGVLGDQKYINTTYSSYYGYYYLQDNTRGSGIFTYDGRNRTVLPGSLWADGDNQFFASYDAAAVDAHYYAGVVYDYYKNVHGRLSYDGSNAAIRSTVHYGRGYNNAFWNGSQMVYGDGDGQTFLPFSGGIDVVGHELTHAVTDYTAGLVYQNESGAINEAMSDIFGTLVEFYANRNPDWEIGEDIYTPGIAGDALRSMSDPAKYGDPDHYSKRYTGTQDNGGVHTNSGIINKAAYLLSQGGVHYGVSVTGIGRDKMGKIFYRALVYYLTPTSNFSQLRAACVQAAADLYGSTSQEVNSVKQAFNAVGVY.

The signal sequence occupies residues 1–25 (MDKRAMLGAIGLAFGLMAWPFGASA). The propeptide at 26–228 (KEKSMVWNEQ…EAKPGGGQPV (203 aa)) is activation peptide. Ca(2+)-binding residues include D287, D289, Q291, and D368. H372 lines the Zn(2+) pocket. The active site involves E373. Zn(2+) is bound by residues H376 and E396. Ca(2+) is bound by residues N413, D415, E417, E420, Y423, T424, I427, and D430. H461 acts as the Proton donor in catalysis.

The protein belongs to the peptidase M4 family. The cofactor is Ca(2+). Requires Zn(2+) as cofactor.

The protein localises to the secreted. It carries out the reaction Preferential cleavage: Xaa-|-Leu &gt; Xaa-|-Phe.. Extracellular zinc metalloprotease. The polypeptide is Thermolysin (npr) (Bacillus caldolyticus).